The chain runs to 288 residues: ATP synthase gamma chain (288 aa).

It belongs to the ATPase gamma chain family. F-type ATPases have 2 components, CF(1) - the catalytic core - and CF(0) - the membrane proton channel. CF(1) has five subunits: alpha(3), beta(3), gamma(1), delta(1), epsilon(1). CF(0) has three main subunits: a, b and c.

It is found in the cell inner membrane. Produces ATP from ADP in the presence of a proton gradient across the membrane. The gamma chain is believed to be important in regulating ATPase activity and the flow of protons through the CF(0) complex. The protein is ATP synthase gamma chain of Aliivibrio salmonicida (strain LFI1238) (Vibrio salmonicida (strain LFI1238)).